The sequence spans 476 residues: Cysteine--tRNA ligase (476 aa).

C29 is a Zn(2+) binding site. The 'HIGH' region signature appears at 31-41 (PTVYDYPHLGH). Zn(2+)-binding residues include C209, H234, and E238. The 'KMSKS' region signature appears at 266–270 (KMSKS). K269 contacts ATP.

It belongs to the class-I aminoacyl-tRNA synthetase family. Zn(2+) is required as a cofactor.

The protein resides in the cytoplasm. The enzyme catalyses tRNA(Cys) + L-cysteine + ATP = L-cysteinyl-tRNA(Cys) + AMP + diphosphate. The protein is Cysteine--tRNA ligase of Thermococcus gammatolerans (strain DSM 15229 / JCM 11827 / EJ3).